Consider the following 291-residue polypeptide: MPAKIIDGKTIAQTIRSEVAVRVQQRVAAGRRAPGLAVVLVGENPASQIYVASKRRACEEVGFVSRSYDLPDTTSEAELLNLIDQLNNDSDIDGILVQLPLPAGIDNVKVLERIQPDKDVDGFHPYNIGRLCQRAPKLRPCTPRGIATLLERCGINTYGLNAVIIGASNIVGRPMSLELLLAGCTTTVTHRFTKDLRHHVEQADLLIVAVGKPNFIPGEWIKPGAIVIDVGINRLEDGKVIGDVDFETASERASWISPVPGGVGPMTVATLIQNTLQACEEYHDVERIEGC.

Residues 166–168 (GAS) and isoleucine 232 contribute to the NADP(+) site.

It belongs to the tetrahydrofolate dehydrogenase/cyclohydrolase family. In terms of assembly, homodimer.

The catalysed reaction is (6R)-5,10-methylene-5,6,7,8-tetrahydrofolate + NADP(+) = (6R)-5,10-methenyltetrahydrofolate + NADPH. It catalyses the reaction (6R)-5,10-methenyltetrahydrofolate + H2O = (6R)-10-formyltetrahydrofolate + H(+). It functions in the pathway one-carbon metabolism; tetrahydrofolate interconversion. In terms of biological role, catalyzes the oxidation of 5,10-methylenetetrahydrofolate to 5,10-methenyltetrahydrofolate and then the hydrolysis of 5,10-methenyltetrahydrofolate to 10-formyltetrahydrofolate. This is Bifunctional protein FolD from Photorhabdus laumondii subsp. laumondii (strain DSM 15139 / CIP 105565 / TT01) (Photorhabdus luminescens subsp. laumondii).